A 259-amino-acid polypeptide reads, in one-letter code: UPF0246 protein VFMJ11_2214 (259 aa).

It belongs to the UPF0246 family.

The protein is UPF0246 protein VFMJ11_2214 of Aliivibrio fischeri (strain MJ11) (Vibrio fischeri).